The primary structure comprises 162 residues: Ribosome maturation factor RimP (162 aa).

This sequence belongs to the RimP family.

Its subcellular location is the cytoplasm. Functionally, required for maturation of 30S ribosomal subunits. This chain is Ribosome maturation factor RimP, found in Cupriavidus metallidurans (strain ATCC 43123 / DSM 2839 / NBRC 102507 / CH34) (Ralstonia metallidurans).